Reading from the N-terminus, the 267-residue chain is 3-deoxy-manno-octulosonate cytidylyltransferase (267 aa).

Belongs to the KdsB family.

It is found in the cytoplasm. It carries out the reaction 3-deoxy-alpha-D-manno-oct-2-ulosonate + CTP = CMP-3-deoxy-beta-D-manno-octulosonate + diphosphate. It participates in nucleotide-sugar biosynthesis; CMP-3-deoxy-D-manno-octulosonate biosynthesis; CMP-3-deoxy-D-manno-octulosonate from 3-deoxy-D-manno-octulosonate and CTP: step 1/1. It functions in the pathway bacterial outer membrane biogenesis; lipopolysaccharide biosynthesis. Its function is as follows. Activates KDO (a required 8-carbon sugar) for incorporation into bacterial lipopolysaccharide in Gram-negative bacteria. This is 3-deoxy-manno-octulosonate cytidylyltransferase from Paraburkholderia phymatum (strain DSM 17167 / CIP 108236 / LMG 21445 / STM815) (Burkholderia phymatum).